Reading from the N-terminus, the 219-residue chain is Inner membrane protein YccA (219 aa).

Over 1–22 (MDRIVSSSHDRTSLLSTHKVLR) the chain is Periplasmic. 2 consecutive transmembrane segments (helical) span residues 23–43 (NTYF…TAST) and 44–64 (VLML…GLMF). The Periplasmic portion of the chain corresponds to 65–73 (LTYKTANKP). The helical transmembrane segment at 74-94 (TGIISAFAFTGFLGYILGPIL) threads the bilayer. Over 95 to 104 (NTYLSAGMGD) the chain is Cytoplasmic. A helical membrane pass occupies residues 105 to 125 (VIAMALGGTALVFFCCSAYVL). Topologically, residues 126–133 (TTRKDMSF) are periplasmic. Residues 134-154 (LGGMLMAGIVVVLIGMVANIF) form a helical membrane-spanning segment. Residues 155 to 157 (LQL) are Cytoplasmic-facing. Residues 158–178 (PALHLAISAVFILISSGAILF) form a helical membrane-spanning segment. Topologically, residues 179–195 (ETSNIIHGGETNYIRAT) are periplasmic. A helical membrane pass occupies residues 196–216 (VSLYVSLYNIFVSLLSILGFA). Residues 217-219 (SRD) lie on the Cytoplasmic side of the membrane.

Belongs to the BI1 family.

It is found in the cell inner membrane. In Escherichia coli O6:H1 (strain CFT073 / ATCC 700928 / UPEC), this protein is Inner membrane protein YccA (yccA).